The sequence spans 274 residues: Hydroxyethylthiazole kinase (274 aa).

Met-46 serves as a coordination point for substrate. Arg-122 and Thr-173 together coordinate ATP. Position 200 (Gly-200) interacts with substrate.

It belongs to the Thz kinase family. Mg(2+) serves as cofactor.

It carries out the reaction 5-(2-hydroxyethyl)-4-methylthiazole + ATP = 4-methyl-5-(2-phosphooxyethyl)-thiazole + ADP + H(+). The protein operates within cofactor biosynthesis; thiamine diphosphate biosynthesis; 4-methyl-5-(2-phosphoethyl)-thiazole from 5-(2-hydroxyethyl)-4-methylthiazole: step 1/1. Functionally, catalyzes the phosphorylation of the hydroxyl group of 4-methyl-5-beta-hydroxyethylthiazole (THZ). This is Hydroxyethylthiazole kinase from Clostridium tetani (strain Massachusetts / E88).